The following is a 156-amino-acid chain: MARRRRPERREILPDPRFGDVVLSKFMNSVMLDGKKSVAESIVYGALEAVEARAKKEPLGVFHEALANIRPNIEVRSRRVGGATYQVPVEVRPDRAQALAIRWLITAARNRSETTMAARLSGELLDASNNRGNAVKKREDTHRMAEANRAFSHYRW.

It belongs to the universal ribosomal protein uS7 family. Part of the 30S ribosomal subunit. Contacts proteins S9 and S11.

Functionally, one of the primary rRNA binding proteins, it binds directly to 16S rRNA where it nucleates assembly of the head domain of the 30S subunit. Is located at the subunit interface close to the decoding center, probably blocks exit of the E-site tRNA. The polypeptide is Small ribosomal subunit protein uS7 (Sphingopyxis alaskensis (strain DSM 13593 / LMG 18877 / RB2256) (Sphingomonas alaskensis)).